The sequence spans 197 residues: ATP-dependent Clp protease proteolytic subunit (197 aa).

The Nucleophile role is filled by Ser98. The active site involves His123.

It belongs to the peptidase S14 family. As to quaternary structure, fourteen ClpP subunits assemble into 2 heptameric rings which stack back to back to give a disk-like structure with a central cavity, resembling the structure of eukaryotic proteasomes.

The protein resides in the cytoplasm. It catalyses the reaction Hydrolysis of proteins to small peptides in the presence of ATP and magnesium. alpha-casein is the usual test substrate. In the absence of ATP, only oligopeptides shorter than five residues are hydrolyzed (such as succinyl-Leu-Tyr-|-NHMec, and Leu-Tyr-Leu-|-Tyr-Trp, in which cleavage of the -Tyr-|-Leu- and -Tyr-|-Trp bonds also occurs).. Functionally, cleaves peptides in various proteins in a process that requires ATP hydrolysis. Has a chymotrypsin-like activity. Plays a major role in the degradation of misfolded proteins. This chain is ATP-dependent Clp protease proteolytic subunit, found in Pediococcus pentosaceus (strain ATCC 25745 / CCUG 21536 / LMG 10740 / 183-1w).